The following is a 466-amino-acid chain: Soluble pyridine nucleotide transhydrogenase (466 aa).

Residue 36 to 45 (ERYNNVGGGC) participates in FAD binding.

Belongs to the class-I pyridine nucleotide-disulfide oxidoreductase family. It depends on FAD as a cofactor.

The protein resides in the cytoplasm. The enzyme catalyses NAD(+) + NADPH = NADH + NADP(+). Conversion of NADPH, generated by peripheral catabolic pathways, to NADH, which can enter the respiratory chain for energy generation. This chain is Soluble pyridine nucleotide transhydrogenase, found in Yersinia enterocolitica serotype O:8 / biotype 1B (strain NCTC 13174 / 8081).